The primary structure comprises 563 residues: F-box/kelch-repeat protein At5g42350 (563 aa).

Positions 129–175 (YRKHVYLPDDILEMCLMRLPLTSLLNAHLVCKKWQSMANTQRFLQMR) constitute an F-box domain. Kelch repeat units follow at residues 184-231 (WLFL…SIHE), 232-282 (EIYI…ATEV), and 355-402 (VLIA…IICN).

The sequence is that of F-box/kelch-repeat protein At5g42350 from Arabidopsis thaliana (Mouse-ear cress).